We begin with the raw amino-acid sequence, 360 residues long: Mannose-1-phosphate guanylyltransferase catalytic subunit beta (360 aa).

Residues 2–222 are substrate-binding domain; that stretch reads KALILVGGYG…QGFWMDIGQP (221 aa). Asp-110 contacts GDP-alpha-D-mannose. Asp-110 serves as a coordination point for Mg(2+). The active site involves Lys-162. Position 218 (Asp-218) interacts with GDP-alpha-D-mannose. The tract at residues 245–360 is hexapeptide repeat domain; sequence YSGPGIVGNV…ESVPEPRIIM (116 aa).

Belongs to the transferase hexapeptide repeat family. In terms of assembly, component of the GMPPA-GMPPB mannose-1-phosphate guanylyltransferase complex composed of 4 GMPPA subunits and 8 GMPPB subunits; the complex is organized into three layers, a central layer made up of 2 GMPPA dimers sandwiched between two layers each made up of 2 GMPPB dimers. GMPPB catalytic activity is reduced when part of the complex and binding of GDP-alpha-D-Mannose by GMPPA induces allosteric feedback inhibition of GMPPB. Requires Mg(2+) as cofactor.

It localises to the cytoplasm. The enzyme catalyses alpha-D-mannose 1-phosphate + GTP + H(+) = GDP-alpha-D-mannose + diphosphate. It participates in nucleotide-sugar biosynthesis; GDP-alpha-D-mannose biosynthesis; GDP-alpha-D-mannose from alpha-D-mannose 1-phosphate (GTP route): step 1/1. Its activity is regulated as follows. Enzyme activity is reduced by incorporation into the GMPPA-GMPPB mannose-1-phosphate guanylyltransferase complex. Allosterically inhibited, when part of the GMPPA-GMPPB complex, by GDP-alpha-D-mannose binding to GMPPA. Its function is as follows. Catalytic subunit of the GMPPA-GMPPB mannose-1-phosphate guanylyltransferase complex. Catalyzes the formation of GDP-mannose, an essential precursor of glycan moieties of glycoproteins and glycolipids. Can catalyze the reverse reaction in vitro. Together with GMPPA regulates GDP-alpha-D-mannose levels. The protein is Mannose-1-phosphate guanylyltransferase catalytic subunit beta of Mus musculus (Mouse).